The primary structure comprises 858 residues: Selenocysteine insertion sequence-binding protein 2 (858 aa).

Disordered stretches follow at residues 127 to 261 (KPRH…GDVG), 275 to 296 (SDHT…CTQE), and 327 to 625 (LKKT…DSAT). Basic and acidic residues-rich tracts occupy residues 147–166 (KPSD…RRAD), 188–197 (SSLKSDGYHK), and 215–224 (PEFEFSRLDF). Polar residues-rich tracts occupy residues 281–296 (AVTS…CTQE) and 327–352 (LKKT…NPSY). Residues 380 to 387 (KNKKKKEK) carry the Nuclear localization signal motif. The segment covering 418 to 429 (RRHRGQSPKLHS) has biased composition (basic residues). Positions 430 to 447 (KQQTQNEFKTSGKKSQVP) are enriched in polar residues. Residues 539–548 (ILKERQERMQ) show a composition bias toward basic and acidic residues. Composition is skewed to polar residues over residues 554–563 (SAVSLTVASD) and 571–582 (GASNQTPSQDNP). The RNA-binding stretch occupies residues 678 to 699 (LVLGLREVLKHLKLRKLKCIII). The disordered stretch occupies residues 785–819 (MRQEQAGEPGPQSPPSPPMQDPIPSTEEGTLPSTG). Pro residues predominate over residues 795–805 (PQSPPSPPMQD).

It is found in the cytoplasm. The protein resides in the nucleus. In terms of biological role, mRNA-binding protein that binds to the SECIS (selenocysteine insertion sequence) element present in the 3'-UTR of mRNAs encoding selenoproteins and facilitates the incorporation of the rare amino acid selenocysteine. Insertion of selenocysteine at UGA codons is mediated by SECISBP2 and EEFSEC: SECISBP2 (1) specifically binds the SECIS sequence once the 80S ribosome encounters an in-frame UGA codon and (2) contacts the RPS27A/eS31 of the 40S ribosome before ribosome stalling. (3) GTP-bound EEFSEC then delivers selenocysteinyl-tRNA(Sec) to the 80S ribosome and adopts a preaccommodated state conformation. (4) After GTP hydrolysis, EEFSEC dissociates from the assembly, selenocysteinyl-tRNA(Sec) accommodates, and peptide bond synthesis and selenoprotein elongation occur. The protein is Selenocysteine insertion sequence-binding protein 2 of Mus musculus (Mouse).